We begin with the raw amino-acid sequence, 394 residues long: 8-amino-7-oxononanoate synthase (394 aa).

Arg21 lines the substrate pocket. 112-113 (GY) is a binding site for pyridoxal 5'-phosphate. His137 is a binding site for substrate. Positions 183, 211, and 239 each coordinate pyridoxal 5'-phosphate. Position 242 is an N6-(pyridoxal phosphate)lysine (Lys242). Thr358 contributes to the substrate binding site.

It belongs to the class-II pyridoxal-phosphate-dependent aminotransferase family. BioF subfamily. In terms of assembly, homodimer. The cofactor is pyridoxal 5'-phosphate.

It catalyses the reaction 6-carboxyhexanoyl-[ACP] + L-alanine + H(+) = (8S)-8-amino-7-oxononanoate + holo-[ACP] + CO2. The protein operates within cofactor biosynthesis; biotin biosynthesis. Its function is as follows. Catalyzes the decarboxylative condensation of pimeloyl-[acyl-carrier protein] and L-alanine to produce 8-amino-7-oxononanoate (AON), [acyl-carrier protein], and carbon dioxide. The chain is 8-amino-7-oxononanoate synthase from Paraburkholderia xenovorans (strain LB400).